Reading from the N-terminus, the 310-residue chain is Putative S-adenosyl-L-methionine-dependent methyltransferase MAB_4587c (310 aa).

S-adenosyl-L-methionine contacts are provided by residues Asp126 and 155-156; that span reads DL.

Belongs to the UPF0677 family.

Exhibits S-adenosyl-L-methionine-dependent methyltransferase activity. In Mycobacteroides abscessus (strain ATCC 19977 / DSM 44196 / CCUG 20993 / CIP 104536 / JCM 13569 / NCTC 13031 / TMC 1543 / L948) (Mycobacterium abscessus), this protein is Putative S-adenosyl-L-methionine-dependent methyltransferase MAB_4587c.